We begin with the raw amino-acid sequence, 312 residues long: MKALWALLLVPLLTGCLAEGELEVTDQLPGQSDQPWEQALNRFWDYLRWVQTLSDQVQEELQSSQVTQELTVLMEDTMTEVKAYKKELEEQLGPVAEETRARLAKEVQAAQARLGADMEDLRNRLGQYRNEVNTMLGQSTEELRSRLSTHLRKMRKRLMRDADDLQKRLAVYKAGAQEGAERGVSAIRERLGPLVEQGRQRTANLGAGAAQPLRDRAQALSDRIRGRLEEVGNQARDRLEEVREQMEEVRSKMEEQTQQIRLQAEIFQARIKGWFEPLVEDMQRQWANLMEKIQASVATNSIASTTVPLENQ.

Positions 1–18 (MKALWALLLVPLLTGCLA) are cleaved as a signal peptide. A run of 8 repeats spans residues 72-93 (VLMEDTMTEVKAYKKELEEQLG), 94-115 (PVAEETRARLAKEVQAAQARLG), 116-137 (ADMEDLRNRLGQYRNEVNTMLG), 138-159 (QSTEELRSRLSTHLRKMRKRLM), 160-181 (RDADDLQKRLAVYKAGAQEGAE), 182-203 (RGVSAIRERLGPLVEQGRQRTA), 204-225 (NLGAGAAQPLRDRAQALSDRIR), and 226-247 (GRLEEVGNQARDRLEEVREQME). The segment at 72 to 247 (VLMEDTMTEV…RLEEVREQME (176 aa)) is 8 X 22 AA approximate tandem repeats. Methionine 135 bears the Methionine sulfoxide mark. Serine 139 is subject to Phosphoserine. An LDL and other lipoprotein receptors binding region spans residues 150 to 160 (HLRKMRKRLMR). The segment at 150-160 (HLRKMRKRLMR) is LDL receptor binding. 154–157 (MRKR) is a binding site for heparin. The tract at residues 202 to 282 (TANLGAGAAQ…GWFEPLVEDM (81 aa)) is lipid-binding and lipoprotein association. 221-228 (SDRIRGRL) serves as a coordination point for heparin. Residues 258–312 (QQIRLQAEIFQARIKGWFEPLVEDMQRQWANLMEKIQASVATNSIASTTVPLENQ) are homooligomerization. Residues 270 to 282 (RIKGWFEPLVEDM) are specificity for association with VLDL.

This sequence belongs to the apolipoprotein A1/A4/E family. In terms of assembly, homotetramer. May interact with ABCA1; functionally associated with ABCA1 in the biogenesis of HDLs. May interact with APP/A4 amyloid-beta peptide; the interaction is extremely stable in vitro but its physiological significance is unclear. May interact with MAPT. May interact with MAP2. In the cerebrospinal fluid, interacts with secreted SORL1. Interacts with PMEL; this allows the loading of PMEL luminal fragment on ILVs to induce fibril nucleation. Post-translationally, APOE exists as multiple glycosylated and sialylated glycoforms within cells and in plasma. The extent of glycosylation and sialylation are tissue and context specific. In terms of processing, glycated in plasma VLDL. Phosphorylated by FAM20C in the extracellular medium.

The protein resides in the secreted. Its subcellular location is the extracellular space. The protein localises to the extracellular matrix. It localises to the extracellular vesicle. It is found in the endosome. The protein resides in the multivesicular body. Functionally, APOE is an apolipoprotein, a protein associating with lipid particles, that mainly functions in lipoprotein-mediated lipid transport between organs via the plasma and interstitial fluids. APOE is a core component of plasma lipoproteins and is involved in their production, conversion and clearance. Apolipoproteins are amphipathic molecules that interact both with lipids of the lipoprotein particle core and the aqueous environment of the plasma. As such, APOE associates with chylomicrons, chylomicron remnants, very low density lipoproteins (VLDL) and intermediate density lipoproteins (IDL) but shows a preferential binding to high-density lipoproteins (HDL). It also binds a wide range of cellular receptors including the LDL receptor/LDLR and the very low-density lipoprotein receptor/VLDLR that mediate the cellular uptake of the APOE-containing lipoprotein particles. Finally, APOE also has a heparin-binding activity and binds heparan-sulfate proteoglycans on the surface of cells, a property that supports the capture and the receptor-mediated uptake of APOE-containing lipoproteins by cells. The sequence is that of Apolipoprotein E (Apoe) from Rattus norvegicus (Rat).